The chain runs to 218 residues: Cell division protein SepF (218 aa).

Residues 20-81 are disordered; that stretch reads DDEYYDDRAP…GYRGGYADEP (62 aa). Basic and acidic residues predominate over residues 36 to 65; sequence PRFDDDYGRYDGRDYDDARSDSRGDLRGEP.

Belongs to the SepF family. As to quaternary structure, homodimer. Interacts with FtsZ.

The protein resides in the cytoplasm. Its function is as follows. Cell division protein that is part of the divisome complex and is recruited early to the Z-ring. Probably stimulates Z-ring formation, perhaps through the cross-linking of FtsZ protofilaments. Its function overlaps with FtsA. The protein is Cell division protein SepF of Mycobacterium bovis (strain ATCC BAA-935 / AF2122/97).